A 509-amino-acid chain; its full sequence is uncharacterized protein (509 aa).

This sequence belongs to the MG032/MG096/MG288 family.

This is an uncharacterized protein from Mycoplasma pneumoniae (strain ATCC 29342 / M129 / Subtype 1) (Mycoplasmoides pneumoniae).